Consider the following 178-residue polypeptide: ATP-dependent protease subunit HslV (178 aa).

T5 is a catalytic residue. Na(+)-binding residues include S161, C164, and T167.

This sequence belongs to the peptidase T1B family. HslV subfamily. In terms of assembly, a double ring-shaped homohexamer of HslV is capped on each side by a ring-shaped HslU homohexamer. The assembly of the HslU/HslV complex is dependent on binding of ATP.

It is found in the cytoplasm. It catalyses the reaction ATP-dependent cleavage of peptide bonds with broad specificity.. Allosterically activated by HslU binding. Its function is as follows. Protease subunit of a proteasome-like degradation complex believed to be a general protein degrading machinery. This is ATP-dependent protease subunit HslV from Syntrophomonas wolfei subsp. wolfei (strain DSM 2245B / Goettingen).